A 253-amino-acid chain; its full sequence is MKVPILSRLRSLSSIDRNNEEKNVDMEHQVSLDFASAPNSPTVNKSDKNNKHDKHDKSGEKAPSTPKITTTSPPSPSSSSSPSPSSSTTTSPTTTTTTLSGSDSVSKKSGKTLSPTTPTLKSTLSTSSMKSTPSGSVKNTPRQTPRQTPRQTPRGSMTPREGGSDQFESGSLSPIGETYLEGEGYEESPKSSSFFSKFISNTFSGFSMDAAPETVVTSTPRQQSRPPSAQNTPNFTSQGGSRSTSRRQSAIQL.

A compositionally biased stretch (low complexity) spans Met1–Ser14. Disordered stretches follow at residues Met1–Ser192 and Pro212–Leu253. Basic and acidic residues-rich tracts occupy residues Arg17 to Val30 and Lys45 to Glu60. 2 stretches are compositionally biased toward low complexity: residues Pro63–Ser104 and Lys111–Arg154. Residues Val215 to Phe235 show a composition bias toward polar residues. Over residues Thr236–Leu253 the composition is skewed to low complexity.

This is an uncharacterized protein from Dictyostelium discoideum (Social amoeba).